A 203-amino-acid polypeptide reads, in one-letter code: Snake venom metalloproteinase atroxase (203 aa).

Glu-1 carries the post-translational modification Pyrrolidone carboxylic acid (Glu). Asn-5 carries N-linked (GlcNAc...) asparagine glycosylation. Residues Arg-9–Lys-203 enclose the Peptidase M12B domain. Residues Glu-12 and Asp-96 each coordinate Ca(2+). His-145 is a Zn(2+) binding site. Glu-146 is a catalytic residue. Positions 149 and 155 each coordinate Zn(2+). Cys-160 and Cys-167 are joined by a disulfide. Asn-202 contacts Ca(2+).

This sequence belongs to the venom metalloproteinase (M12B) family. P-I subfamily. In terms of assembly, monomer. It depends on Zn(2+) as a cofactor. The N-terminus is blocked. In terms of tissue distribution, expressed by the venom gland.

It localises to the secreted. The enzyme catalyses Cleavage of 5-His-|-Leu-6, 9-Ser-|-His-10, 10-His-|-Leu-11, 14-Ala-|-Leu-15 and 16-Tyr-|-Leu-17 in insulin B chain.. With respect to regulation, inhibited by EDTA and alpha2-macroglobulin. In terms of biological role, snake venom zinc metalloprotease that has Aalpha, Bbeta fibrin(ogen)olytic activities. It cleaves the Aalpha chain of fibrinogen first followed by the Bbeta chain and shows no effect on the gamma chain. Does not induce or inhibit platelet aggregation, and is unable to activate plasminogen. Exhibits low lethality when tested on mice. Intravenous administration results in thrombolysis within one hour followed by recanalization. Fibrinogenolytic activity results in a 60% decrease in the rat's plasma fibrinogen level. Histological examination of kidney, liver, heart and lung tissue shows no necrosis nor hemorrhage. This is Snake venom metalloproteinase atroxase from Crotalus atrox (Western diamondback rattlesnake).